The chain runs to 65 residues: Large ribosomal subunit protein bL35 (65 aa).

Positions Met1–Ala11 are enriched in basic residues. The interval Met1–Arg25 is disordered.

It belongs to the bacterial ribosomal protein bL35 family.

The chain is Large ribosomal subunit protein bL35 from Nitratidesulfovibrio vulgaris (strain ATCC 29579 / DSM 644 / CCUG 34227 / NCIMB 8303 / VKM B-1760 / Hildenborough) (Desulfovibrio vulgaris).